The primary structure comprises 515 residues: U3 small nucleolar RNA-associated protein 15 homolog (515 aa).

7 WD repeats span residues 36–75 (KEFG…PIKT), 78–117 (RFKD…ALRQ), 120–159 (GHSK…EITS), 162–202 (EHTD…SVMS), 204–242 (DHGQ…QLLV), 246–285 (NHHK…VVHS), and 287–326 (DYAA…RKQL).

As to quaternary structure, part of the small subunit (SSU) processome, composed of more than 70 proteins and the RNA chaperone small nucleolar RNA (snoRNA) U3. May be a component of the proposed t-UTP subcomplex of the ribosomal small subunit (SSU) processome.

It localises to the nucleus. The protein localises to the nucleolus. Its function is as follows. Ribosome biogenesis factor. Involved in nucleolar processing of pre-18S ribosomal RNA. Required for optimal pre-ribosomal RNA transcription by RNA polymerase I. Part of the small subunit (SSU) processome, first precursor of the small eukaryotic ribosomal subunit. During the assembly of the SSU processome in the nucleolus, many ribosome biogenesis factors, an RNA chaperone and ribosomal proteins associate with the nascent pre-rRNA and work in concert to generate RNA folding, modifications, rearrangements and cleavage as well as targeted degradation of pre-ribosomal RNA by the RNA exosome. The sequence is that of U3 small nucleolar RNA-associated protein 15 homolog (utp15) from Xenopus tropicalis (Western clawed frog).